A 121-amino-acid polypeptide reads, in one-letter code: Large ribosomal subunit protein uL18 (121 aa).

This sequence belongs to the universal ribosomal protein uL18 family. As to quaternary structure, part of the 50S ribosomal subunit; part of the 5S rRNA/L5/L18/L25 subcomplex. Contacts the 5S and 23S rRNAs.

This is one of the proteins that bind and probably mediate the attachment of the 5S RNA into the large ribosomal subunit, where it forms part of the central protuberance. The protein is Large ribosomal subunit protein uL18 of Herpetosiphon aurantiacus (strain ATCC 23779 / DSM 785 / 114-95).